The following is a 67-amino-acid chain: ATP synthase F(0) complex subunit 8 (67 aa).

A helical membrane pass occupies residues 8–24; that stretch reads TWFINIVSMILTLFIVF. At lysine 54 the chain carries N6-acetyllysine; alternate. Lysine 54 bears the N6-succinyllysine; alternate mark. The residue at position 57 (lysine 57) is an N6-acetyllysine.

This sequence belongs to the ATPase protein 8 family. Component of the ATP synthase complex composed at least of ATP5F1A/subunit alpha, ATP5F1B/subunit beta, ATP5MC1/subunit c (homooctomer), MT-ATP6/subunit a, MT-ATP8/subunit 8, ATP5ME/subunit e, ATP5MF/subunit f, ATP5MG/subunit g, ATP5MK/subunit k, ATP5MJ/subunit j, ATP5F1C/subunit gamma, ATP5F1D/subunit delta, ATP5F1E/subunit epsilon, ATP5PF/subunit F6, ATP5PB/subunit b, ATP5PD/subunit d, ATP5PO/subunit OSCP. ATP synthase complex consists of a soluble F(1) head domain (subunits alpha(3) and beta(3)) - the catalytic core - and a membrane F(0) domain - the membrane proton channel (subunits c, a, 8, e, f, g, k and j). These two domains are linked by a central stalk (subunits gamma, delta, and epsilon) rotating inside the F1 region and a stationary peripheral stalk (subunits F6, b, d, and OSCP). Interacts with PRICKLE3.

The protein resides in the mitochondrion membrane. Its function is as follows. Subunit 8, of the mitochondrial membrane ATP synthase complex (F(1)F(0) ATP synthase or Complex V) that produces ATP from ADP in the presence of a proton gradient across the membrane which is generated by electron transport complexes of the respiratory chain. ATP synthase complex consist of a soluble F(1) head domain - the catalytic core - and a membrane F(1) domain - the membrane proton channel. These two domains are linked by a central stalk rotating inside the F(1) region and a stationary peripheral stalk. During catalysis, ATP synthesis in the catalytic domain of F(1) is coupled via a rotary mechanism of the central stalk subunits to proton translocation. In vivo, can only synthesize ATP although its ATP hydrolase activity can be activated artificially in vitro. Part of the complex F(0) domain. This is ATP synthase F(0) complex subunit 8 from Equus caballus (Horse).